Here is a 142-residue protein sequence, read N- to C-terminus: uncharacterized protein (142 aa).

Asparagine 29 and asparagine 67 each carry an N-linked (GlcNAc...) asparagine; by host glycan. Residues 88 to 108 (VFYLGYPVIFIIGVTYFSIIA) form a helical membrane-spanning segment.

It localises to the membrane. This is an uncharacterized protein from Acanthamoeba polyphaga mimivirus (APMV).